The chain runs to 324 residues: Acetyl-coenzyme A carboxylase carboxyl transferase subunit beta (324 aa).

In terms of domain architecture, CoA carboxyltransferase N-terminal spans 28–297 (LWCKCPSCNA…AVAPAAAKAP (270 aa)). Cys-32, Cys-35, Cys-51, and Cys-54 together coordinate Zn(2+). The C4-type zinc finger occupies 32-54 (CPSCNAILYKSEVERNLEVCPKC).

Belongs to the AccD/PCCB family. Acetyl-CoA carboxylase is a heterohexamer composed of biotin carboxyl carrier protein (AccB), biotin carboxylase (AccC) and two subunits each of ACCase subunit alpha (AccA) and ACCase subunit beta (AccD). The cofactor is Zn(2+).

The protein localises to the cytoplasm. The catalysed reaction is N(6)-carboxybiotinyl-L-lysyl-[protein] + acetyl-CoA = N(6)-biotinyl-L-lysyl-[protein] + malonyl-CoA. The protein operates within lipid metabolism; malonyl-CoA biosynthesis; malonyl-CoA from acetyl-CoA: step 1/1. Functionally, component of the acetyl coenzyme A carboxylase (ACC) complex. Biotin carboxylase (BC) catalyzes the carboxylation of biotin on its carrier protein (BCCP) and then the CO(2) group is transferred by the transcarboxylase to acetyl-CoA to form malonyl-CoA. The polypeptide is Acetyl-coenzyme A carboxylase carboxyl transferase subunit beta (Methylococcus capsulatus (strain ATCC 33009 / NCIMB 11132 / Bath)).